Reading from the N-terminus, the 441-residue chain is Ribulose bisphosphate carboxylase large chain (441 aa).

Positions 89 and 139 each coordinate substrate. Lys141 acts as the Proton acceptor in catalysis. Lys143 is a substrate binding site. Mg(2+) contacts are provided by Lys167, Asp169, and Glu170. An N6-carboxylysine modification is found at Lys167. His260 (proton acceptor) is an active-site residue. Residues Xaa261 and Ser345 each contribute to the substrate site.

The protein belongs to the RuBisCO large chain family. Type I subfamily. As to quaternary structure, heterohexadecamer of 8 large chains and 8 small chains; disulfide-linked. The disulfide link is formed within the large subunit homodimers. Mg(2+) is required as a cofactor. In terms of processing, the disulfide bond which can form in the large chain dimeric partners within the hexadecamer appears to be associated with oxidative stress and protein turnover.

The protein resides in the plastid. Its subcellular location is the chloroplast. It catalyses the reaction 2 (2R)-3-phosphoglycerate + 2 H(+) = D-ribulose 1,5-bisphosphate + CO2 + H2O. The enzyme catalyses D-ribulose 1,5-bisphosphate + O2 = 2-phosphoglycolate + (2R)-3-phosphoglycerate + 2 H(+). Functionally, ruBisCO catalyzes two reactions: the carboxylation of D-ribulose 1,5-bisphosphate, the primary event in carbon dioxide fixation, as well as the oxidative fragmentation of the pentose substrate in the photorespiration process. Both reactions occur simultaneously and in competition at the same active site. This chain is Ribulose bisphosphate carboxylase large chain, found in Asclepias exaltata (Poke milkweed).